We begin with the raw amino-acid sequence, 657 residues long: Protein kinase and PP2C-like domain-containing protein (657 aa).

The 296-residue stretch at phenylalanine 32 to valine 327 folds into the Protein kinase domain. ATP is bound by residues isoleucine 38 to valine 46 and lysine 59. Aspartate 156 serves as the catalytic Proton acceptor; for kinase activity. The 258-residue stretch at serine 390–leucine 647 folds into the PPM-type phosphatase domain. Mn(2+) is bound by residues aspartate 426, glycine 427, aspartate 598, and aspartate 638.

In the N-terminal section; belongs to the protein kinase superfamily. Ser/Thr protein kinase family. This sequence in the C-terminal section; belongs to the PP2C family. Mg(2+) is required as a cofactor. The cofactor is Mn(2+).

The enzyme catalyses L-seryl-[protein] + ATP = O-phospho-L-seryl-[protein] + ADP + H(+). It catalyses the reaction L-threonyl-[protein] + ATP = O-phospho-L-threonyl-[protein] + ADP + H(+). It carries out the reaction O-phospho-L-seryl-[protein] + H2O = L-seryl-[protein] + phosphate. The catalysed reaction is O-phospho-L-threonyl-[protein] + H2O = L-threonyl-[protein] + phosphate. In Oryza sativa subsp. japonica (Rice), this protein is Protein kinase and PP2C-like domain-containing protein.